Reading from the N-terminus, the 241-residue chain is Aquaporin Z 1 (241 aa).

The chain crosses the membrane as a helical span at residues 23-43 (AVFAAAFPELGIGFLGVAFAF). The short motif at 63–65 (NPA) is the NPA 1 element. 3 helical membrane-spanning segments follow: residues 85 to 105 (IVAQVLGAVVAAAALYVILTG), 129 to 149 (LLSALLIEIILTAFFLVVILG), and 156 to 176 (PVGFAPVAIGLALTLIHLISI). The NPA 2 motif lies at 184–186 (NPA). A helical membrane pass occupies residues 204 to 224 (WLFWLAPILGGAIGAVVWKIF).

It belongs to the MIP/aquaporin (TC 1.A.8) family. In terms of assembly, homotetramer.

The protein resides in the cell inner membrane. The catalysed reaction is H2O(in) = H2O(out). Functionally, channel that permits osmotically driven movement of water in both directions. It is involved in the osmoregulation and in the maintenance of cell turgor during volume expansion in rapidly growing cells. It mediates rapid entry or exit of water in response to abrupt changes in osmolarity. This Agrobacterium fabrum (strain C58 / ATCC 33970) (Agrobacterium tumefaciens (strain C58)) protein is Aquaporin Z 1.